A 400-amino-acid polypeptide reads, in one-letter code: Acetate kinase (400 aa).

Residue asparagine 9 coordinates Mg(2+). An ATP-binding site is contributed by lysine 16. Substrate is bound at residue arginine 90. Aspartate 147 (proton donor/acceptor) is an active-site residue. Residues 207-211, 282-284, and 330-334 contribute to the ATP site; these read HIGNG, DLR, and GIGEN. Position 385 (glutamate 385) interacts with Mg(2+).

Belongs to the acetokinase family. In terms of assembly, homodimer. Mg(2+) serves as cofactor. Requires Mn(2+) as cofactor.

Its subcellular location is the cytoplasm. The enzyme catalyses acetate + ATP = acetyl phosphate + ADP. It functions in the pathway metabolic intermediate biosynthesis; acetyl-CoA biosynthesis; acetyl-CoA from acetate: step 1/2. Catalyzes the formation of acetyl phosphate from acetate and ATP. Can also catalyze the reverse reaction. In Staphylococcus aureus (strain Mu3 / ATCC 700698), this protein is Acetate kinase.